Reading from the N-terminus, the 559-residue chain is Formate--tetrahydrofolate ligase (559 aa).

ATP is bound at residue 68–75 (TPAGEGKS).

The protein belongs to the formate--tetrahydrofolate ligase family.

It carries out the reaction (6S)-5,6,7,8-tetrahydrofolate + formate + ATP = (6R)-10-formyltetrahydrofolate + ADP + phosphate. It functions in the pathway one-carbon metabolism; tetrahydrofolate interconversion. In Lactobacillus gasseri (strain ATCC 33323 / DSM 20243 / BCRC 14619 / CIP 102991 / JCM 1131 / KCTC 3163 / NCIMB 11718 / NCTC 13722 / AM63), this protein is Formate--tetrahydrofolate ligase.